Reading from the N-terminus, the 134-residue chain is Fluoride-specific ion channel FluC 2 (134 aa).

The next 4 helical transmembrane spans lie at 8 to 28 (IVAIGIGGAIGTSFRFLLNTW), 40 to 60 (IENIVGSFLLGFLTSWFLVIV), 69 to 89 (LGVGLCGGFTTMSTLAADSVL), and 99 to 119 (LIYVAASLFGGIGFALLGYLL). Residues G75 and T78 each contribute to the Na(+) site.

It belongs to the fluoride channel Fluc/FEX (TC 1.A.43) family.

The protein localises to the cell membrane. The catalysed reaction is fluoride(in) = fluoride(out). Its activity is regulated as follows. Na(+) is not transported, but it plays an essential structural role and its presence is essential for fluoride channel function. Its function is as follows. Fluoride-specific ion channel. Important for reducing fluoride concentration in the cell, thus reducing its toxicity. This is Fluoride-specific ion channel FluC 2 from Halalkalibacterium halodurans (strain ATCC BAA-125 / DSM 18197 / FERM 7344 / JCM 9153 / C-125) (Bacillus halodurans).